Consider the following 102-residue polypeptide: Inner membrane protein YaiY (102 aa).

Residues methionine 1–asparagine 24 lie on the Cytoplasmic side of the membrane. The helical transmembrane segment at isoleucine 25–leucine 45 threads the bilayer. Residues valine 46–threonine 74 are Periplasmic-facing. A helical membrane pass occupies residues isoleucine 75–leucine 95. The Cytoplasmic portion of the chain corresponds to histidine 96–glutamine 102.

The protein localises to the cell inner membrane. The sequence is that of Inner membrane protein YaiY (yaiY) from Escherichia coli O157:H7.